The sequence spans 108 residues: Insulin (108 aa).

The first 24 residues, 1–24, serve as a signal peptide directing secretion; it reads MALWMHLLPLLALLALWGPEPAPA. 3 cysteine pairs are disulfide-bonded: Cys31–Cys94, Cys43–Cys107, and Cys93–Cys98. Positions 57-85 are cleaved as a propeptide — c peptide; the sequence is EAEDLQVGQVELGGGSITGSLPPLEGPMQ.

It belongs to the insulin family. As to quaternary structure, heterodimer of a B chain and an A chain linked by two disulfide bonds.

The protein resides in the secreted. Its function is as follows. Insulin decreases blood glucose concentration. It increases cell permeability to monosaccharides, amino acids and fatty acids. It accelerates glycolysis, the pentose phosphate cycle, and glycogen synthesis in liver. This chain is Insulin (INS), found in Aotus trivirgatus (Three-striped night monkey).